A 397-amino-acid chain; its full sequence is Ethanolaminephosphotransferase 1 (397 aa).

A2 bears the N-acetylalanine mark. The next 10 helical transmembrane spans lie at 47-69 (WLAP…LLMA), 84-103 (HVPD…AYTL), 123-145 (LFDH…SIFG), 150-172 (GVSV…LSHW), 179-201 (ILFL…IVTA), 221-243 (LFTA…LNFF), 256-278 (VYEA…AWIL), 291-310 (VFYF…LIVC), 317-339 (CPTL…LGVA), and 344-366 (SILL…VRVV). Residue U387 is a non-standard amino acid, selenocysteine.

This sequence belongs to the CDP-alcohol phosphatidyltransferase class-I family. It depends on Mg(2+) as a cofactor. The cofactor is Mn(2+). In terms of tissue distribution, widely expressed. Abundant in brain, placenta, liver and pancreas, followed by heart, skeletal muscle, lung and kidney. In brain it is strongly expressed in cerebellum, followed by the occipital pole and the frontal lobe.

It is found in the endoplasmic reticulum membrane. The enzyme catalyses CDP-ethanolamine + a 1,2-diacyl-sn-glycerol = a 1,2-diacyl-sn-glycero-3-phosphoethanolamine + CMP + H(+). It catalyses the reaction 1-O-alkyl-2-acyl-sn-glycerol + CDP-ethanolamine = a 1-O-alkyl-2-acyl-sn-glycero-3-phosphoethanolamine + CMP + H(+). It participates in phospholipid metabolism; phosphatidylethanolamine biosynthesis; phosphatidylethanolamine from ethanolamine: step 3/3. In terms of biological role, ethanolaminephosphotransferase that catalyzes the transfer of phosphoethanolamine (PE) from CDP-ethanolamine to lipid acceptors, the final step in the synthesis of PE via the 'Kennedy' pathway. PE is the second most abundant phospholipid of membranes in mammals and is involved in various membrane-related cellular processes. The enzyme is critical for the synthesis of several PE species and also catalyzes the synthesis of plasmanyl-PE, a lipid required for proper myelination and neurodevelopment, from 1-alkyl-2-acylglycerol. The sequence is that of Ethanolaminephosphotransferase 1 from Homo sapiens (Human).